Consider the following 100-residue polypeptide: Putative pterin-4-alpha-carbinolamine dehydratase (100 aa).

This sequence belongs to the pterin-4-alpha-carbinolamine dehydratase family.

The enzyme catalyses (4aS,6R)-4a-hydroxy-L-erythro-5,6,7,8-tetrahydrobiopterin = (6R)-L-erythro-6,7-dihydrobiopterin + H2O. This is Putative pterin-4-alpha-carbinolamine dehydratase from Allorhizobium ampelinum (strain ATCC BAA-846 / DSM 112012 / S4) (Agrobacterium vitis (strain S4)).